Reading from the N-terminus, the 166-residue chain is Nicotine metabolites export pump subunit NepB (166 aa).

4 consecutive transmembrane segments (helical) span residues 51–71 (LHAW…TVIL), 77–97 (FQLP…FFLL), 108–128 (VAYA…GAII), and 133–153 (VTLG…ILNL).

It belongs to the drug/metabolite transporter (DMT) superfamily. Small multidrug resistance (SMR) (TC 2.A.7.1) family. NepA/NepB subfamily. As to quaternary structure, the efflux pump is composed of NepA and NepB.

It localises to the cell membrane. In terms of biological role, component of an efflux pump responsible for the transport of nicotine breakdown products, in particular methylamine, out of the cell. This pump apparently serves as a metabolic valve for nicotine catabolites and may protect the bacteria from the potentially toxic side effects of these compounds. In Paenarthrobacter nicotinovorans (Arthrobacter nicotinovorans), this protein is Nicotine metabolites export pump subunit NepB (nepB).